The following is a 256-amino-acid chain: Global transcriptional regulator CodY (256 aa).

The interval 1-155 (MSLLSKTREL…AATVIGMEIL (155 aa)) is GAF domain. The H-T-H motif DNA-binding region spans 203–222 (ASKVADRVGITRSVIVNALR).

Belongs to the CodY family.

The protein resides in the cytoplasm. Functionally, DNA-binding global transcriptional regulator which is involved in the adaptive response to starvation and acts by directly or indirectly controlling the expression of numerous genes in response to nutrient availability. During rapid exponential growth, CodY is highly active and represses genes whose products allow adaptation to nutrient depletion. In Staphylococcus epidermidis (strain ATCC 35984 / DSM 28319 / BCRC 17069 / CCUG 31568 / BM 3577 / RP62A), this protein is Global transcriptional regulator CodY.